A 495-amino-acid chain; its full sequence is Membrane-bound lytic murein transglycosylase F (495 aa).

The signal sequence occupies residues 1–30; the sequence is MSRIRHHRFIQSCLVISTLLITLTGCQVES. Residues 31–270 are non-LT domain; it reads EPKTKLEQIR…LLEEKYFGHV (240 aa). Positions 272–495 are LT domain; it reads SFDYVDTRAF…SVSQAIETKK (224 aa). Residue E315 is part of the active site.

In the N-terminal section; belongs to the bacterial solute-binding protein 3 family. It in the C-terminal section; belongs to the transglycosylase Slt family.

Its subcellular location is the cell outer membrane. It catalyses the reaction Exolytic cleavage of the (1-&gt;4)-beta-glycosidic linkage between N-acetylmuramic acid (MurNAc) and N-acetylglucosamine (GlcNAc) residues in peptidoglycan, from either the reducing or the non-reducing ends of the peptidoglycan chains, with concomitant formation of a 1,6-anhydrobond in the MurNAc residue.. In terms of biological role, murein-degrading enzyme that degrades murein glycan strands and insoluble, high-molecular weight murein sacculi, with the concomitant formation of a 1,6-anhydromuramoyl product. Lytic transglycosylases (LTs) play an integral role in the metabolism of the peptidoglycan (PG) sacculus. Their lytic action creates space within the PG sacculus to allow for its expansion as well as for the insertion of various structures such as secretion systems and flagella. This is Membrane-bound lytic murein transglycosylase F from Aliivibrio fischeri (strain ATCC 700601 / ES114) (Vibrio fischeri).